A 457-amino-acid polypeptide reads, in one-letter code: tRNA modification GTPase MnmE (457 aa).

(6S)-5-formyl-5,6,7,8-tetrahydrofolate is bound by residues R23, E86, and R125. The TrmE-type G domain maps to 221–377 (GVSVLIAGKP…LREAVFETFI (157 aa)). N231 contributes to the K(+) binding site. GTP-binding positions include 231-236 (NVGKSS), 250-256 (TSVPGTT), and 275-278 (DTAG). S235 is a binding site for Mg(2+). Residues T250, V252, and T255 each coordinate K(+). Position 256 (T256) interacts with Mg(2+). K457 serves as a coordination point for (6S)-5-formyl-5,6,7,8-tetrahydrofolate.

Belongs to the TRAFAC class TrmE-Era-EngA-EngB-Septin-like GTPase superfamily. TrmE GTPase family. As to quaternary structure, homodimer. Heterotetramer of two MnmE and two MnmG subunits. K(+) serves as cofactor.

Its subcellular location is the cytoplasm. Its function is as follows. Exhibits a very high intrinsic GTPase hydrolysis rate. Involved in the addition of a carboxymethylaminomethyl (cmnm) group at the wobble position (U34) of certain tRNAs, forming tRNA-cmnm(5)s(2)U34. This chain is tRNA modification GTPase MnmE, found in Geobacter metallireducens (strain ATCC 53774 / DSM 7210 / GS-15).